Reading from the N-terminus, the 359-residue chain is Nicotinate-nucleotide--dimethylbenzimidazole phosphoribosyltransferase (359 aa).

Glutamate 318 (proton acceptor) is an active-site residue.

It belongs to the CobT family. In terms of assembly, homodimer.

The catalysed reaction is 5,6-dimethylbenzimidazole + nicotinate beta-D-ribonucleotide = alpha-ribazole 5'-phosphate + nicotinate + H(+). The protein operates within nucleoside biosynthesis; alpha-ribazole biosynthesis; alpha-ribazole from 5,6-dimethylbenzimidazole: step 1/2. Functionally, catalyzes the synthesis of alpha-ribazole-5'-phosphate from nicotinate mononucleotide (NAMN) and 5,6-dimethylbenzimidazole (DMB). This is Nicotinate-nucleotide--dimethylbenzimidazole phosphoribosyltransferase from Escherichia coli O8 (strain IAI1).